A 111-amino-acid chain; its full sequence is Ig kappa chain V-III region PC 2485/PC 4039 (111 aa).

The segment at 1–23 is framework-1; it reads DIVLTQSPASLAVSLGQRATISC. A disulfide bond links Cys-23 and Cys-92. Residues 24–38 form a complementarity-determining-1 region; it reads RASKSVSTSGYSYMH. The interval 39–53 is framework-2; sequence WYQQKPGQPPKLLIY. The segment at 54–60 is complementarity-determining-2; that stretch reads LASSLES. The framework-3 stretch occupies residues 61–92; the sequence is GVPARFSGSGSGTDFTLNIQPVEEEDAAIYYC. Positions 93–101 are complementarity-determining-3; sequence QHSRELPLT. Positions 102–111 are framework-4; it reads FGAGTKLELK.

The sequence is that of Ig kappa chain V-III region PC 2485/PC 4039 from Mus musculus (Mouse).